The chain runs to 66 residues: Scarabaecin (66 aa).

Positions 1–26 are cleaved as a signal peptide; sequence MKTLTFYTLLLCAALYSNFFDCKAVA. Cys46 and Cys57 are joined by a disulfide.

The protein localises to the secreted. In terms of biological role, possesses antifungal activity against phytopathogenic fungi such as P.oryzae, R.solani and B.cinerea but not against phytopathogenic bacteria. Shows weak activity against the insect pathogenic fungus B.bassiana and against S.aureus. Binds chitin. The sequence is that of Scarabaecin from Oryctes rhinoceros (Coconut rhinoceros beetle).